We begin with the raw amino-acid sequence, 238 residues long: Ribonuclease PH (238 aa).

Phosphate contacts are provided by residues Arg-86 and 124–126 (GTR).

It belongs to the RNase PH family. Homohexameric ring arranged as a trimer of dimers.

The catalysed reaction is tRNA(n+1) + phosphate = tRNA(n) + a ribonucleoside 5'-diphosphate. Its function is as follows. Phosphorolytic 3'-5' exoribonuclease that plays an important role in tRNA 3'-end maturation. Removes nucleotide residues following the 3'-CCA terminus of tRNAs; can also add nucleotides to the ends of RNA molecules by using nucleoside diphosphates as substrates, but this may not be physiologically important. Probably plays a role in initiation of 16S rRNA degradation (leading to ribosome degradation) during starvation. The polypeptide is Ribonuclease PH (Agrobacterium fabrum (strain C58 / ATCC 33970) (Agrobacterium tumefaciens (strain C58))).